Reading from the N-terminus, the 152-residue chain is Ribosome maturation factor RimP (152 aa).

This sequence belongs to the RimP family.

It localises to the cytoplasm. Required for maturation of 30S ribosomal subunits. The protein is Ribosome maturation factor RimP of Burkholderia lata (strain ATCC 17760 / DSM 23089 / LMG 22485 / NCIMB 9086 / R18194 / 383).